Here is a 358-residue protein sequence, read N- to C-terminus: S-adenosylmethionine decarboxylase proenzyme (358 aa).

Active-site residues include glutamate 11 and glutamate 14. Serine 71 (schiff-base intermediate with substrate; via pyruvic acid) is an active-site residue. Serine 71 bears the Pyruvic acid (Ser); by autocatalysis mark. Cysteine 85 (proton donor; for catalytic activity) is an active-site residue. Residues serine 234 and histidine 247 each act as proton acceptor; for processing activity in the active site.

The protein belongs to the eukaryotic AdoMetDC family. Pyruvate serves as cofactor. Is synthesized initially as an inactive proenzyme. Formation of the active enzyme involves a self-maturation process in which the active site pyruvoyl group is generated from an internal serine residue via an autocatalytic post-translational modification. Two non-identical subunits are generated from the proenzyme in this reaction, and the pyruvate is formed at the N-terminus of the alpha chain, which is derived from the carboxyl end of the proenzyme. The post-translation cleavage follows an unusual pathway, termed non-hydrolytic serinolysis, in which the side chain hydroxyl group of the serine supplies its oxygen atom to form the C-terminus of the beta chain, while the remainder of the serine residue undergoes an oxidative deamination to produce ammonia and the pyruvoyl group blocking the N-terminus of the alpha chain.

It carries out the reaction S-adenosyl-L-methionine + H(+) = S-adenosyl 3-(methylsulfanyl)propylamine + CO2. It functions in the pathway amine and polyamine biosynthesis; S-adenosylmethioninamine biosynthesis; S-adenosylmethioninamine from S-adenosyl-L-methionine: step 1/1. This chain is S-adenosylmethionine decarboxylase proenzyme (SAMDC), found in Solanum chilense (Tomato).